Reading from the N-terminus, the 732-residue chain is Elongation factor 2 (732 aa).

In terms of domain architecture, tr-type G spans 19–260 (ERIRNIGIAA…MVVRHLPSPI (242 aa)). GTP is bound by residues 28-35 (AHIDHGKT), 94-98 (DTPGH), and 148-151 (NKVD). A Diphthamide modification is found at His-597.

This sequence belongs to the TRAFAC class translation factor GTPase superfamily. Classic translation factor GTPase family. EF-G/EF-2 subfamily.

It is found in the cytoplasm. Catalyzes the GTP-dependent ribosomal translocation step during translation elongation. During this step, the ribosome changes from the pre-translocational (PRE) to the post-translocational (POST) state as the newly formed A-site-bound peptidyl-tRNA and P-site-bound deacylated tRNA move to the P and E sites, respectively. Catalyzes the coordinated movement of the two tRNA molecules, the mRNA and conformational changes in the ribosome. This is Elongation factor 2 (fusA) from Pyrococcus furiosus (strain ATCC 43587 / DSM 3638 / JCM 8422 / Vc1).